A 479-amino-acid chain; its full sequence is GTPase Obg (479 aa).

Positions 2–159 (PRFVDRVVIH…RDLTLELKTV (158 aa)) constitute an Obg domain. An OBG-type G domain is found at 160–340 (ADVGLVGFPS…LIFGLWQMVS (181 aa)). Residues 166–173 (GFPSAGKS), 191–195 (FTTLV), 212–215 (DVPG), 292–295 (NKID), and 321–323 (STV) each bind GTP. The Mg(2+) site is built by S173 and T193. In terms of domain architecture, OCT spans 358–436 (PVPVDDSGFD…IGEMTFDWEP (79 aa)). Residues 438-479 (TPAGGHVAMSGRGTDVRLERSDRVGAAERKAARRQRRERDDD) are disordered. Residues 451 to 467 (TDVRLERSDRVGAAERK) are compositionally biased toward basic and acidic residues.

Belongs to the TRAFAC class OBG-HflX-like GTPase superfamily. OBG GTPase family. Monomer. It depends on Mg(2+) as a cofactor.

It localises to the cytoplasm. Functionally, an essential GTPase which binds GTP, GDP and possibly (p)ppGpp with moderate affinity, with high nucleotide exchange rates and a fairly low GTP hydrolysis rate. Plays a role in control of the cell cycle, stress response, ribosome biogenesis and in those bacteria that undergo differentiation, in morphogenesis control. In Mycobacterium ulcerans (strain Agy99), this protein is GTPase Obg.